The sequence spans 314 residues: Lipoyl synthase (314 aa).

7 residues coordinate [4Fe-4S] cluster: cysteine 55, cysteine 60, cysteine 66, cysteine 81, cysteine 85, cysteine 88, and serine 292. The region spanning 67-281 (WEDREATFLI…TQYAEGLGFS (215 aa)) is the Radical SAM core domain.

Belongs to the radical SAM superfamily. Lipoyl synthase family. [4Fe-4S] cluster is required as a cofactor.

The protein resides in the cytoplasm. The catalysed reaction is [[Fe-S] cluster scaffold protein carrying a second [4Fe-4S](2+) cluster] + N(6)-octanoyl-L-lysyl-[protein] + 2 oxidized [2Fe-2S]-[ferredoxin] + 2 S-adenosyl-L-methionine + 4 H(+) = [[Fe-S] cluster scaffold protein] + N(6)-[(R)-dihydrolipoyl]-L-lysyl-[protein] + 4 Fe(3+) + 2 hydrogen sulfide + 2 5'-deoxyadenosine + 2 L-methionine + 2 reduced [2Fe-2S]-[ferredoxin]. It functions in the pathway protein modification; protein lipoylation via endogenous pathway; protein N(6)-(lipoyl)lysine from octanoyl-[acyl-carrier-protein]: step 2/2. Its function is as follows. Catalyzes the radical-mediated insertion of two sulfur atoms into the C-6 and C-8 positions of the octanoyl moiety bound to the lipoyl domains of lipoate-dependent enzymes, thereby converting the octanoylated domains into lipoylated derivatives. The protein is Lipoyl synthase of Mycobacterium leprae (strain Br4923).